Consider the following 627-residue polypeptide: Putative polyketide hydroxylase (627 aa).

FAD is bound by residues 22-51 (PVLVVGGSLVGLSTSVFLGRLGVRHTLVER) and 309-319 (YRSGRVLLAGD). The interval 370 to 469 (AEATSARAAH…GGGPGGGGPQ (100 aa)) is disordered. Positions 395-469 (AGGGGPGAGT…GGGPGGGGPQ (75 aa)) are enriched in gly residues.

The protein belongs to the PheA/TfdB FAD monooxygenase family. FAD serves as cofactor.

In terms of biological role, involved in developmentally regulated synthesis of a compound biosynthetically related to polyketide antibiotics which is essential for spore color in Streptococcus coelicolor. In Streptomyces coelicolor (strain ATCC BAA-471 / A3(2) / M145), this protein is Putative polyketide hydroxylase.